The sequence spans 197 residues: Large ribosomal subunit protein bL25 (197 aa).

Belongs to the bacterial ribosomal protein bL25 family. CTC subfamily. In terms of assembly, part of the 50S ribosomal subunit; part of the 5S rRNA/L5/L18/L25 subcomplex. Contacts the 5S rRNA. Binds to the 5S rRNA independently of L5 and L18.

This is one of the proteins that binds to the 5S RNA in the ribosome where it forms part of the central protuberance. The chain is Large ribosomal subunit protein bL25 from Pseudomonas putida (strain ATCC 700007 / DSM 6899 / JCM 31910 / BCRC 17059 / LMG 24140 / F1).